Consider the following 60-residue polypeptide: Large ribosomal subunit protein uL30 (60 aa).

The protein belongs to the universal ribosomal protein uL30 family. In terms of assembly, part of the 50S ribosomal subunit.

This Streptococcus pneumoniae (strain Hungary19A-6) protein is Large ribosomal subunit protein uL30.